The primary structure comprises 130 residues: Small ribosomal subunit protein uS9 (130 aa).

Belongs to the universal ribosomal protein uS9 family.

The polypeptide is Small ribosomal subunit protein uS9 (Pectobacterium carotovorum subsp. carotovorum (strain PC1)).